The primary structure comprises 351 residues: UPF0421 protein BC_2748 (351 aa).

Transmembrane regions (helical) follow at residues 19–39 (IAVF…IFAV), 74–94 (FTFF…FTIV), 109–129 (TLTA…AFLI), and 131–151 (LATT…IFPP).

The protein belongs to the UPF0421 family.

It is found in the cell membrane. The polypeptide is UPF0421 protein BC_2748 (Bacillus cereus (strain ATCC 14579 / DSM 31 / CCUG 7414 / JCM 2152 / NBRC 15305 / NCIMB 9373 / NCTC 2599 / NRRL B-3711)).